The primary structure comprises 806 residues: Protein bimA (806 aa).

TPR repeat units follow at residues 76–109 and 127–160; these read LGCS…WTSR and AAVL…NPFM. Disordered regions lie at residues 202–348, 353–372, and 401–460; these read VLPP…HRLG, TVSG…QGVG, and REVK…ASSK. A compositionally biased stretch (polar residues) spans 224-237; it reads AGTTRSDSTSTHGS. The segment covering 246–257 has biased composition (low complexity); that stretch reads GSTVSVASSGTG. The interval 260–399 is bimA domain; sequence LPREGMETPG…ISSTALGVKE (140 aa). Positions 328–348 are enriched in basic and acidic residues; the sequence is TKFESDEGHTERDAGMGHRLG. Positions 408–421 are enriched in polar residues; the sequence is TTGNKARTTTSSNV. The span at 432–445 shows a compositional bias: basic and acidic residues; sequence HAGEIHDGDSKEYR. The span at 446 to 459 shows a compositional bias: low complexity; that stretch reads GTSSTSNGSQNASS. 6 TPR repeats span residues 513-546, 581-614, 616-648, 649-682, 684-716, and 751-784; these read PWVL…APSR, PEAW…DPHF, YGFT…DSRH, YNAW…NPSN, VLIC…APHS, and ANVH…DPKA.

The protein belongs to the APC3/CDC27 family.

The protein resides in the nucleus. Its function is as follows. Required for the completion of mitosis in Aspergillus nidulans. In Emericella nidulans (strain FGSC A4 / ATCC 38163 / CBS 112.46 / NRRL 194 / M139) (Aspergillus nidulans), this protein is Protein bimA (bimA).